The following is a 400-amino-acid chain: GDNF family receptor alpha-3 (400 aa).

The first 31 residues, 1–31, serve as a signal peptide directing secretion; sequence MVRPLNPRPLPPVVLMLLLLLPPSPLPLAAG. Cysteine 51 and cysteine 57 are disulfide-bonded. 2 N-linked (GlcNAc...) asparagine glycosylation sites follow: asparagine 95 and asparagine 148. 10 cysteine pairs are disulfide-bonded: cysteine 162–cysteine 218, cysteine 169–cysteine 175, cysteine 186–cysteine 196, cysteine 191–cysteine 239, cysteine 220–cysteine 227, cysteine 248–cysteine 316, cysteine 255–cysteine 261, cysteine 272–cysteine 288, cysteine 281–cysteine 340, and cysteine 318–cysteine 328. Asparagine 309 carries an N-linked (GlcNAc...) asparagine glycan. The GPI-anchor amidated asparagine moiety is linked to residue asparagine 374. A propeptide spans 375–400 (removed in mature form); sequence PAVRPQPWVPSLFSCTLPLILLLSLW.

Belongs to the GDNFR family. In terms of assembly, interacts with ARTN ligand and RET: forms a 2:2:2 ternary complex composed of ARTN ligand, GFRA3 and RET receptor. Interacts with SORL1. N-glycosylated. In terms of tissue distribution, widely expressed in adult and fetus which exhibit a similar pattern. Essentially not expressed in the central nervous system, but highly expressed in several sensory and sympathetic ganglia of the peripheral nervous system. Moderate expression in many non-neuronal tissues, particularly those of the digestive and urogenital systems, but high expression in stomach and appendix. Several types of glandular tissues show low expression. Very low or no expression detected in the hematopoietic system.

It is found in the cell membrane. In terms of biological role, receptor for artemin (ARTN), a growth factor that supports the survival of sensory and sympathetic peripheral neurons. ARTN-binding leads to autophosphorylation and activation of the RET receptor. This is GDNF family receptor alpha-3 (GFRA3) from Homo sapiens (Human).